The following is a 132-amino-acid chain: MTSSTSLKTYVTDKELGGITTPYIIDIIKSIKQIQQRMKDPEIASLEYIKMYDVLGKEFYHFSERHTKIFTEVLQKKNLNTVVSVLYYKDKVEKGELTEEQLQNMLAEKYLPKHLKEEADSRIKEMKERGEI.

This is an uncharacterized protein from Acanthamoeba polyphaga (Amoeba).